We begin with the raw amino-acid sequence, 81 residues long: Cytochrome b559 subunit alpha (81 aa).

A helical transmembrane segment spans residues 21 to 35 (VIHSITIPMLFVAGW). H23 provides a ligand contact to heme.

This sequence belongs to the PsbE/PsbF family. In terms of assembly, heterodimer of an alpha subunit and a beta subunit. PSII is composed of 1 copy each of membrane proteins PsbA, PsbB, PsbC, PsbD, PsbE, PsbF, PsbH, PsbI, PsbJ, PsbK, PsbL, PsbM, PsbT, PsbX, PsbY, PsbZ, Psb30/Ycf12, peripheral proteins PsbO, CyanoQ (PsbQ), PsbU, PsbV and a large number of cofactors. It forms dimeric complexes. Heme b is required as a cofactor.

The protein localises to the cellular thylakoid membrane. This b-type cytochrome is tightly associated with the reaction center of photosystem II (PSII). PSII is a light-driven water:plastoquinone oxidoreductase that uses light energy to abstract electrons from H(2)O, generating O(2) and a proton gradient subsequently used for ATP formation. It consists of a core antenna complex that captures photons, and an electron transfer chain that converts photonic excitation into a charge separation. The protein is Cytochrome b559 subunit alpha of Gloeothece citriformis (strain PCC 7424) (Cyanothece sp. (strain PCC 7424)).